We begin with the raw amino-acid sequence, 490 residues long: Probable cytosol aminopeptidase (490 aa).

2 residues coordinate Mn(2+): lysine 262 and aspartate 267. Residue lysine 274 is part of the active site. Aspartate 285, aspartate 344, and glutamate 346 together coordinate Mn(2+). Arginine 348 is a catalytic residue.

Belongs to the peptidase M17 family. Mn(2+) serves as cofactor.

The protein localises to the cytoplasm. The enzyme catalyses Release of an N-terminal amino acid, Xaa-|-Yaa-, in which Xaa is preferably Leu, but may be other amino acids including Pro although not Arg or Lys, and Yaa may be Pro. Amino acid amides and methyl esters are also readily hydrolyzed, but rates on arylamides are exceedingly low.. The catalysed reaction is Release of an N-terminal amino acid, preferentially leucine, but not glutamic or aspartic acids.. Its function is as follows. Presumably involved in the processing and regular turnover of intracellular proteins. Catalyzes the removal of unsubstituted N-terminal amino acids from various peptides. The polypeptide is Probable cytosol aminopeptidase (Xanthomonas oryzae pv. oryzae (strain MAFF 311018)).